The primary structure comprises 309 residues: Calcium homeostasis modulator protein 5 (309 aa).

Residues 1 to 15 are Cytoplasmic-facing; it reads MDAFQSILKFFLNQK. Residues 16 to 37 form a helical membrane-spanning segment; that stretch reads TAIGYSFMALLTVGSERLFSLV. R32 and V37 together coordinate a 1,2-diacyl-sn-glycero-3-phosphate. Over 38 to 45 the chain is Extracellular; that stretch reads AFKCPCSV. 3 disulfide bridges follow: C41–C127, C43–C158, and C142–C149. The chain crosses the membrane as a helical span at residues 46–70; that stretch reads ENTAYGLVFLFAPAWVLLILGFFLN. Topologically, residues 71–99 are cytoplasmic; that stretch reads NKAWRLFTGCCMNPKKIFPRRRCCRFFYV. Residues 100–129 traverse the membrane as a helical segment; sequence LGHIILSSLVAPVMWLSVALLNGTFYECAM. Residue N121 participates in a 1,2-diacyl-sn-glycero-3-phosphate binding. The Extracellular portion of the chain corresponds to 130–174; that stretch reads SGTRSTRLLEMICKGKPKECWEELHKVSCGKSSMAAMESEEVRLS. A helical transmembrane segment spans residues 175–200; it reads LQAQSQILGWCLICSASFLSLLTTCY. The Cytoplasmic segment spans residues 201 to 309; sequence ARCRSKVSYL…MILVGTAQSL (109 aa). Residue R202 coordinates a 1,2-diacyl-sn-glycero-3-phosphate.

Belongs to the CALHM family. Oligomerizes to form undecameric cone-shaped channels.

The protein resides in the membrane. May assemble to form large pore channels with gating and ion conductance likely regulated by membrane lipids. This chain is Calcium homeostasis modulator protein 5, found in Mus musculus (Mouse).